The following is a 153-amino-acid chain: Regulatory protein RecX (153 aa).

The protein belongs to the RecX family.

It localises to the cytoplasm. In terms of biological role, modulates RecA activity. The sequence is that of Regulatory protein RecX from Neisseria meningitidis serogroup C / serotype 2a (strain ATCC 700532 / DSM 15464 / FAM18).